Reading from the N-terminus, the 354-residue chain is UDP-3-O-acylglucosamine N-acyltransferase (354 aa).

His-258 acts as the Proton acceptor in catalysis.

The protein belongs to the transferase hexapeptide repeat family. LpxD subfamily. As to quaternary structure, homotrimer.

The catalysed reaction is a UDP-3-O-[(3R)-3-hydroxyacyl]-alpha-D-glucosamine + a (3R)-hydroxyacyl-[ACP] = a UDP-2-N,3-O-bis[(3R)-3-hydroxyacyl]-alpha-D-glucosamine + holo-[ACP] + H(+). It participates in bacterial outer membrane biogenesis; LPS lipid A biosynthesis. Functionally, catalyzes the N-acylation of UDP-3-O-acylglucosamine using 3-hydroxyacyl-ACP as the acyl donor. Is involved in the biosynthesis of lipid A, a phosphorylated glycolipid that anchors the lipopolysaccharide to the outer membrane of the cell. The chain is UDP-3-O-acylglucosamine N-acyltransferase from Sinorhizobium fredii (strain NBRC 101917 / NGR234).